A 1354-amino-acid chain; its full sequence is Enhancer of mRNA-decapping protein 4 homolog (1354 aa).

The tract at residues 18 to 38 (PLSASSSPPPSVHRSPRCGKA) is disordered. A Phosphoserine modification is found at S32. WD repeat units lie at residues 309-348 (EEDSLITCAALSPDGTTVAAACADGLVRFYQIYLFDVRNH) and 363-406 (CSLF…CLQT). The disordered stretch occupies residues 552–581 (ERSSLNSKRSQTPEDNLLIKEEPESPNSGT). Over residues 554-565 (SSLNSKRSQTPE) the composition is skewed to polar residues. S561 is modified (phosphoserine). T563 bears the Phosphothreonine mark. S576 carries the phosphoserine modification. T581 is modified (phosphothreonine). S759, S762, and S763 each carry phosphoserine. Residues 765 to 803 (SREVQEIMATQDDADAYEAELENLDDDDDDEEEELANSS) adopt a coiled-coil conformation. Positions 788-799 (LDDDDDDEEEEL) are enriched in acidic residues. 2 disordered regions span residues 788-811 (LDDDDDDEEEELANSSPLPEAVDG) and 838-884 (NTNN…AGGT). The span at 853-884 (NNNTSVGSNSNNNTATTLSTSNTSSSNNAGGT) shows a compositional bias: low complexity. Coiled-coil stretches lie at residues 893–936 (ELNA…HSKQ), 969–1036 (NEHK…QAQM), and 1159–1188 (KHRTELTDAMLETQREVKSLEILLARQVQE). A Phosphoserine modification is found at S1207. Phosphothreonine is present on residues T1211 and T1317. At Y1320 the chain carries Phosphotyrosine.

This sequence belongs to the WD repeat EDC4 family. As to quaternary structure, homodimer. Interacts with Dcp1 and Dcp2. Interacts with Gyf.

Its subcellular location is the cytoplasm. The protein resides in the P-body. In the process of mRNA degradation, seems to play a role in mRNA decapping. Required for silencing a subset of endogenous miRNA targets. This Drosophila melanogaster (Fruit fly) protein is Enhancer of mRNA-decapping protein 4 homolog (Ge-1).